A 439-amino-acid polypeptide reads, in one-letter code: MNVSEVKSGATRSPKFVQLIFVDINGMPKGMEIPASRLQEAIEDGISFDGSSVPGFQGIEDSDLIFKADPDTYVEVPWDNVARVYGYIYKDGKPYGADPRGVLKRVIEKLAEMGIKAYIGPEPEFYLFKKNGSWELEIPDVGGYFDILTLDKAKDIKREIAEYMPSFGLVPEVLHHEVGKAQHEIDFRYDEALKTADNIISFKYIVKAVAEVHGLYATFMPKPIYGMPGNGMHLHISLWKEGENIFKGEEGLSETALHFIGGLLKHAKALTAITNPTVNSYKRLVPGYEAPVYISWGYKNRSALIRVPAFWGNGARIEYRCPDPSANPYFAFAAILMAGLDGIKHKVEPFAYVEENVYEMDEGKRKELGIDTLPGSLGEALDELEKDKVVREALGEAYKNFIEYKRKEWESYLEYLEAKHLPKDTKRVTEWELERYFFI.

Positions arginine 12–lysine 93 constitute a GS beta-grasp domain. The GS catalytic domain occupies proline 99–isoleucine 439. Mg(2+)-binding residues include glutamate 122 and glutamate 124. ATP is bound at residue glutamate 172. The Mg(2+) site is built by glutamate 177 and glutamate 184. An L-glutamate-binding site is contributed by glycine 229. Histidine 233 serves as a coordination point for Mg(2+). Residues histidine 235–serine 237 and serine 237 contribute to the ATP site. The L-glutamate site is built by arginine 283, glutamate 289, and arginine 301. 2 residues coordinate ATP: arginine 301 and arginine 306. Glutamate 318 is a binding site for Mg(2+). Arginine 320 lines the L-glutamate pocket.

The protein belongs to the glutamine synthetase family. Oligomer of 12 subunits arranged in the form of two hexagons. The cofactor is Mg(2+).

Its subcellular location is the cytoplasm. The catalysed reaction is L-glutamate + NH4(+) + ATP = L-glutamine + ADP + phosphate + H(+). Probably involved in nitrogen metabolism via ammonium assimilation. Catalyzes the ATP-dependent biosynthesis of glutamine from glutamate and ammonia. The sequence is that of Glutamine synthetase from Pyrococcus abyssi (strain GE5 / Orsay).